Here is a 55-residue protein sequence, read N- to C-terminus: Ferredoxin-1 (55 aa).

4Fe-4S ferredoxin-type domains are found at residues 2 to 27 (YKIE…EQGD) and 28 to 55 (TIFV…PVAE). Residues cysteine 8, cysteine 11, cysteine 14, cysteine 18, cysteine 37, cysteine 40, cysteine 43, and cysteine 47 each coordinate [4Fe-4S] cluster.

It depends on [4Fe-4S] cluster as a cofactor.

Its function is as follows. Ferredoxins are iron-sulfur proteins that transfer electrons in a wide variety of metabolic reactions. The polypeptide is Ferredoxin-1 (Rhodospirillum rubrum).